A 208-amino-acid polypeptide reads, in one-letter code: Small ribosomal subunit protein uS3 (208 aa).

The 70-residue stretch at 16-85 folds into the KH type-2 domain; that stretch reads IDEYFKKELS…KPQIDVKPVE (70 aa).

This sequence belongs to the universal ribosomal protein uS3 family. As to quaternary structure, part of the 30S ribosomal subunit.

In terms of biological role, binds the lower part of the 30S subunit head. The polypeptide is Small ribosomal subunit protein uS3 (Methanocaldococcus jannaschii (strain ATCC 43067 / DSM 2661 / JAL-1 / JCM 10045 / NBRC 100440) (Methanococcus jannaschii)).